We begin with the raw amino-acid sequence, 553 residues long: Phospholipase-B 81 (553 aa).

Positions 1–35 (MVRFGSAASSDNRRRRCWSWYWGGLLLLWAVAETR) are cleaved as a signal peptide. N69, N313, N416, and N531 each carry an N-linked (GlcNAc...) asparagine glycan.

Belongs to the phospholipase B-like family. Expressed by the venom gland.

The protein localises to the secreted. In terms of biological role, may cause hemolysis. This Drysdalia coronoides (White-lipped snake) protein is Phospholipase-B 81.